Here is a 571-residue protein sequence, read N- to C-terminus: Decapping 5-like protein (571 aa).

Positions 1–17 are enriched in low complexity; it reads MASESSQSSSPSSSQPP. Disordered stretches follow at residues 1 to 27, 102 to 141, 159 to 187, and 258 to 305; these read MASE…SPGN, LQVN…ISGY, LSSK…GSLT, and SQVV…SEAQ. Positions 25–108 constitute a Sm domain; it reads PGNNVGDTFI…IKDLQVNPSP (84 aa). 2 stretches are compositionally biased toward polar residues: residues 104 to 138 and 167 to 187; these read VNPS…SSPI and TQHS…GSLT. The span at 264–279 shows a compositional bias: low complexity; that stretch reads SPDVSSNQSYSSNPSP. Residues 293 to 305 are compositionally biased toward polar residues; it reads SVSSNLSPPSEAQ. The region spanning 419 to 455 is the DFDF domain; that stretch reads RIPSSSIEYTEEFDFEAMNEKFKKSELWGYLGRNNQR. Residues 474–489 carry the FFD box motif; sequence PAYNKDDFFDTISCNQ. A TFG box motif is present at residues 498–518; sequence QQHNQFPEHMRQVPEAFGNNF.

It belongs to the LSM14 family. Homodimer. Component of the decapping complex.

The protein localises to the cytoplasm. It is found in the P-body. In terms of biological role, as a component of the decapping complex, involved in the degradation of mRNAs. Promotes P-body formation. Translational repressor. The sequence is that of Decapping 5-like protein (DCP5-L) from Arabidopsis thaliana (Mouse-ear cress).